Reading from the N-terminus, the 134-residue chain is B3 domain-containing protein At1g16640 (134 aa).

Positions 7–100 form a DNA-binding region, TF-B3; it reads VQFMKPFISE…TFYVIIYGHN (94 aa).

The protein localises to the nucleus. The sequence is that of B3 domain-containing protein At1g16640 from Arabidopsis thaliana (Mouse-ear cress).